A 370-amino-acid polypeptide reads, in one-letter code: Dual-specificity RNA methyltransferase RlmN (370 aa).

Glu-93 serves as the catalytic Proton acceptor. A Radical SAM core domain is found at 99-337 (AEGRGTLCVS…VTTVRKTRGD (239 aa)). The cysteines at positions 106 and 343 are disulfide-linked. Residues Cys-113, Cys-117, and Cys-120 each contribute to the [4Fe-4S] cluster site. S-adenosyl-L-methionine contacts are provided by residues 167-168 (GE), Ser-199, 221-223 (SLH), and Asn-300. Cys-343 serves as the catalytic S-methylcysteine intermediate.

It belongs to the radical SAM superfamily. RlmN family. It depends on [4Fe-4S] cluster as a cofactor.

The protein resides in the cytoplasm. The catalysed reaction is adenosine(2503) in 23S rRNA + 2 reduced [2Fe-2S]-[ferredoxin] + 2 S-adenosyl-L-methionine = 2-methyladenosine(2503) in 23S rRNA + 5'-deoxyadenosine + L-methionine + 2 oxidized [2Fe-2S]-[ferredoxin] + S-adenosyl-L-homocysteine. It catalyses the reaction adenosine(37) in tRNA + 2 reduced [2Fe-2S]-[ferredoxin] + 2 S-adenosyl-L-methionine = 2-methyladenosine(37) in tRNA + 5'-deoxyadenosine + L-methionine + 2 oxidized [2Fe-2S]-[ferredoxin] + S-adenosyl-L-homocysteine. In terms of biological role, specifically methylates position 2 of adenine 2503 in 23S rRNA and position 2 of adenine 37 in tRNAs. m2A2503 modification seems to play a crucial role in the proofreading step occurring at the peptidyl transferase center and thus would serve to optimize ribosomal fidelity. The protein is Dual-specificity RNA methyltransferase RlmN of Francisella tularensis subsp. tularensis (strain FSC 198).